A 148-amino-acid chain; its full sequence is MGFTDKQEALVNSSSEFKQNLPGYSILFYTIVLEKAPAAKGLFSFLKDTAGVEDSPKLQAHAEQVFGLVRDSAAQLRTKGEVVLGNATLGAIHVQKGVTNPHFVVVKEALLQTIKKASGNNWSEELNTAWEVAYDGLATAIKKAMKTA.

The 145-residue stretch at 2–146 (GFTDKQEALV…LATAIKKAMK (145 aa)) folds into the Globin domain. 2 positions are modified to nitrated tyrosine: Tyr24 and Tyr29. Ser44 serves as a coordination point for heme b. Ser44 carries the post-translational modification Phosphoserine. O2 is bound at residue His61. Heme b contacts are provided by His93 and Lys96. Tyr134 is subject to Nitrated tyrosine.

Belongs to the plant globin family. Monomer. Post-translationally, nitrated in effective nodules and particularly in hypoxic conditions; this mechanism may play a protective role in the symbiosis by buffering toxic peroxynitrite NO(2)(-). Nitration level decrease during nodule senescence. In terms of processing, phosphorylation at Ser-44 disrupts the molecular environment of its porphyrin ring oxygen binding pocket, thus leading to a reduced oxygen consumption and to the delivery of oxygen O(2) to symbiosomes. In terms of tissue distribution, root nodules.

Its subcellular location is the cytoplasm. The protein resides in the cytosol. It localises to the nucleus. In terms of biological role, leghemoglobin that reversibly binds oxygen O(2) through a pentacoordinated heme iron. In root nodules, facilitates the diffusion of oxygen to the bacteroids while preventing the bacterial nitrogenase from being inactivated by buffering dioxygen, nitric oxide and carbon monoxide, and promoting the formation of reactive oxygen species (ROS, e.g. H(2)O(2)). This role is essential for symbiotic nitrogen fixation (SNF). In Pisum sativum (Garden pea), this protein is Leghemoglobin-1.